The primary structure comprises 631 residues: Phosphomethylpyrimidine synthase (631 aa).

Substrate-binding positions include Asn239, Met268, Tyr297, His333, 353-355, 394-397, and Glu433; these read SRG and DGLR. His437 is a Zn(2+) binding site. Tyr460 serves as a coordination point for substrate. His501 provides a ligand contact to Zn(2+). Residues Cys581, Cys584, and Cys589 each contribute to the [4Fe-4S] cluster site.

The protein belongs to the ThiC family. In terms of assembly, homodimer. It depends on [4Fe-4S] cluster as a cofactor.

The catalysed reaction is 5-amino-1-(5-phospho-beta-D-ribosyl)imidazole + S-adenosyl-L-methionine = 4-amino-2-methyl-5-(phosphooxymethyl)pyrimidine + CO + 5'-deoxyadenosine + formate + L-methionine + 3 H(+). Its pathway is cofactor biosynthesis; thiamine diphosphate biosynthesis. Functionally, catalyzes the synthesis of the hydroxymethylpyrimidine phosphate (HMP-P) moiety of thiamine from aminoimidazole ribotide (AIR) in a radical S-adenosyl-L-methionine (SAM)-dependent reaction. This Klebsiella pneumoniae (strain 342) protein is Phosphomethylpyrimidine synthase.